A 492-amino-acid polypeptide reads, in one-letter code: DEAD-box ATP-dependent RNA helicase RhpA (492 aa).

Positions 20–48 (PSFNDLGLKESVLKSVYEAGFTSPSPIQE) match the Q motif motif. Residues 51 to 220 (IPAVLQGRDV…DKILENPIKI (170 aa)) enclose the Helicase ATP-binding domain. Residue 64-71 (AQTGTGKT) coordinates ATP. The short motif at 168-171 (DESD) is the DEAD box element. The 163-residue stretch at 231-393 (DITQRFYVIN…EIPTINENQI (163 aa)) folds into the Helicase C-terminal domain. Residues 445 to 492 (AIQNPKEKTPKPSNKKTPQHERARSFKKGQHRDRHPKTNHYSKKPKRR) are disordered. Residues 469–492 (SFKKGQHRDRHPKTNHYSKKPKRR) are compositionally biased toward basic residues.

This sequence belongs to the DEAD box helicase family. Homodimer. Interacts with RNase J (rnj), might be a member of a minimal RNA degradosome complex.

The protein localises to the cytoplasm. It catalyses the reaction ATP + H2O = ADP + phosphate + H(+). Its function is as follows. DEAD-box RNA helicase probably involved in RNA degradation. Unwinds dsRNA in both 5'- and 3'-directions. The protein is DEAD-box ATP-dependent RNA helicase RhpA (rhpA) of Helicobacter pylori (strain ATCC 700392 / 26695) (Campylobacter pylori).